The following is a 210-amino-acid chain: Mitochondrial cardiolipin hydrolase (210 aa).

At 1–5 the chain is on the mitochondrial intermembrane side; sequence MLLWG. The helical transmembrane segment at 6–24 threads the bilayer; the sequence is RWKLAAGLAGLALSLELFY. The Cytoplasmic portion of the chain corresponds to 25–210; that stretch reads RYMRRRKPLR…YNFFPEKENK (186 aa). The PLD phosphodiesterase domain occupies 138–165; it reads SSGYMHHKFAVVDGTVVLTGSLNWTVQA. Catalysis depends on residues His143, Lys145, and Asp150.

This sequence belongs to the phospholipase D family. MitoPLD/Zucchini subfamily. In terms of assembly, homodimer.

The protein localises to the mitochondrion outer membrane. The enzyme catalyses a cardiolipin + H2O = a 1,2-diacyl-sn-glycero-3-phospho-(1'-sn-glycerol) + a 1,2-diacyl-sn-glycero-3-phosphate + H(+). Its function is as follows. Presents phospholipase and nuclease activities, depending on the different physiological conditions. Plays a key role in mitochondrial fusion and fission via its phospholipase activity. In its phospholipase role, it uses the mitochondrial lipid cardiolipin as substrate to generate phosphatidate (PA or 1,2-diacyl-sn-glycero-3-phosphate), a second messenger signaling lipid. Production of PA facilitates Mitofusin-mediated fusion, whereas the cleavage of PA by the Lipin family of phosphatases produces diacylgycerol (DAG) which promotes mitochondrial fission. Regulates mitochondrial shape through facilitating mitochondrial fusion. During spermatogenesis, plays a critical role in PIWI-interacting RNA (piRNA) biogenesis. piRNAs provide essential protection against the activity of mobile genetic elements. piRNA-mediated transposon silencing is thus critical for maintaining genome stability, in particular in germline cells when transposons are mobilized as a consequence of wide-spread genomic demethylation. Has been shown to be a backbone-non-specific, single strand-specific nuclease, cleaving either RNA or DNA substrates with similar affinity. Produces 5' phosphate and 3' hydroxyl termini, suggesting it could directly participate in the processing of primary piRNA transcripts. Has been proposed to act as a cardiolipin hydrolase to generate phosphatidic acid at mitochondrial surface. Although it cannot be excluded that it can act as a phospholipase in some circumstances, this activity could not be confirmed. This Xenopus laevis (African clawed frog) protein is Mitochondrial cardiolipin hydrolase (pld6).